The following is a 632-amino-acid chain: Putative ankyrin repeat protein L767 (632 aa).

ANK repeat units lie at residues 61–97 (YGNT…DYEF), 228–250 (FDNE…YIVE), 251–282 (KGFY…NLTD), 345–374 (NLDI…NVDD), and 517–546 (NSIE…NDTD).

The sequence is that of Putative ankyrin repeat protein L767 from Acanthamoeba polyphaga mimivirus (APMV).